We begin with the raw amino-acid sequence, 473 residues long: H(+)/Cl(-) exchange transporter ClcA (473 aa).

At 1–32 (MNTDTPTFEAQQVVRLRRGDLIRRLLQRDKTP) the chain is on the cytoplasmic side. The helical transmembrane segment at 33-69 (LAILLTAAVVGTVTGLIGVAFEKAVTWVQNLRIGALV) threads the bilayer. Residues 70–76 (QTADYAI) are Periplasmic-facing. A helical membrane pass occupies residues 77-100 (LVWPLAFILSALLAMVGYFLVRKF). The Cytoplasmic segment spans residues 101 to 108 (APEAGGSG). The Selectivity filter part_1 signature appears at 106–110 (GSGIP). A chloride-binding site is contributed by serine 107. The segment at residues 109–116 (IPEIEGAL) is an intramembrane region (helical). Residues 117–123 (EELRPVR) are Cytoplasmic-facing. A helical membrane pass occupies residues 124–141 (WWRVLPVKFVGGMGTLGA). Topologically, residues 142–147 (GMVLGR) are periplasmic. Positions 146–150 (GREGP) match the Selectivity filter part_2 motif. A helical transmembrane segment spans residues 148–166 (EGPTVQIGGNIGRMVLDLF). Residues 167-176 (RMRSAEARHT) are Cytoplasmic-facing. 2 intramembrane regions (helical) span residues 177 to 189 (LLATGAAAGLSAA) and 193 to 201 (PLAGILFII). At 202-214 (EEMRPQFRYNLIS) the chain is on the cytoplasmic side. The helical transmembrane segment at 215–232 (IKAVFTGVIMSSIVFRIF) threads the bilayer. Residues 233-252 (NGEAPIIEVGKLSNAPVNTL) are Periplasmic-facing. A helical membrane pass occupies residues 253–281 (WLYLILGMIFGCVGPLFNHLVLRTQDMFQ). Topologically, residues 282 to 287 (RFHGGE) are cytoplasmic. Residues 288–309 (IKKWVLMGGAIGGLCGILGLIE) form a helical membrane-spanning segment. The Periplasmic portion of the chain corresponds to 310 to 329 (PEAAGGGFNLIPIAAAGNYS). The helical transmembrane segment at 330–349 (VGLLLFIFIARVLTTLLCFS) threads the bilayer. Over 350 to 354 (SGAPG) the chain is Cytoplasmic. Positions 355–359 (GIFAP) match the Selectivity filter part_3 motif. The helical transmembrane segment at 355–376 (GIFAPMLALGTLLGTAFGMAAA) threads the bilayer. Residues isoleucine 356 and phenylalanine 357 each contribute to the chloride site. At 377-386 (ACFPQYHLEA) the chain is on the periplasmic side. Positions 387–401 (GTFAIAGMGALLAAS) form an intramembrane region, helical. The note=Loop between two helices intramembrane region spans 402-404 (VRA). Residues 405-416 (PLTGIVLVLEMT) constitute an intramembrane region (helical). The segment at residues 417-421 (DNYQL) is an intramembrane region (note=Loop between two helices). The helical transmembrane segment at 422-438 (ILPMIITCLGATLLAQF) threads the bilayer. At 439-473 (MGGKPLYSTILARTLAKQDAEQAAKSQRSVAGENT) the chain is on the cytoplasmic side. Tyrosine 445 serves as a coordination point for chloride.

The protein belongs to the chloride channel (TC 2.A.49) family. ClcA subfamily. Homodimer.

It localises to the cell inner membrane. It catalyses the reaction 2 chloride(in) + H(+)(out) = 2 chloride(out) + H(+)(in). Functionally, proton-coupled chloride transporter. Functions as antiport system and exchanges two chloride ions for 1 proton. Probably acts as an electrical shunt for an outwardly-directed proton pump that is linked to amino acid decarboxylation, as part of the extreme acid resistance (XAR) response. This Citrobacter koseri (strain ATCC BAA-895 / CDC 4225-83 / SGSC4696) protein is H(+)/Cl(-) exchange transporter ClcA.